A 500-amino-acid polypeptide reads, in one-letter code: NF-kappa-B inhibitor epsilon (500 aa).

Over residues 1–10 (MNQRRSESRP) the composition is skewed to basic and acidic residues. Disordered regions lie at residues 1–66 (MNQR…PAWA), 84–215 (LSSL…YGSS), and 222–241 (SLLG…LPHV). Ser-157, Ser-161, and Ser-183 each carry phosphoserine. Over residues 161-186 (SLRSLRSLPESTSAPASGPSDGSPQP) the composition is skewed to low complexity. A compositionally biased stretch (basic and acidic residues) spans 196 to 209 (EPQEKEDADGERAD). ANK repeat units follow at residues 258–291 (DGDT…DIQN), 293–322 (LYQT…SRAL), 326–355 (HGDT…EPGR), 369–398 (QGLA…DIDV), 403–432 (SGKT…QVDA), and 436–465 (NGCT…DSLL).

It belongs to the NF-kappa-B inhibitor family. In terms of assembly, interacts with RELA, REL, NFKB1 nuclear factor NF-kappa-B p50 subunit and NFKB2 nuclear factor NF-kappa-B p52 subunit. Interacts with HNRNPA2B1; the interaction may be mediated by the RRM2 domain of HNRNPA2B1, and HNRNPA2B1 may interact simultaneously with FAM76B and either NFKBIA or NFKBIE to form a complex. Serine phosphorylated; followed by proteasome-dependent degradation. Highly expressed in spleen, testis and lung, followed by kidney, pancreas, heart, placenta and brain. Also expressed in granulocytes and macrophages.

Its subcellular location is the cytoplasm. Functionally, sequesters NF-kappa-B transcription factor complexes in the cytoplasm, thereby inhibiting their activity. Sequestered complexes include NFKB1-RELA (p50-p65) and NFKB1-REL (p50-c-Rel) complexes. Limits B-cell activation in response to pathogens, and also plays an important role in B-cell development. The protein is NF-kappa-B inhibitor epsilon (NFKBIE) of Homo sapiens (Human).